The primary structure comprises 398 residues: uncharacterized protein (398 aa).

The chain crosses the membrane as a helical span at residues 88-108; the sequence is IGFTIGFAIFFILLFLLSNMV.

This sequence to B.megaterium SpoIV.

The protein localises to the cell membrane. This is an uncharacterized protein from Bacillus subtilis (strain 168).